A 425-amino-acid polypeptide reads, in one-letter code: Serine--tRNA ligase (425 aa).

233-235 (TAE) lines the L-serine pocket. Residues 264–266 (RRE) and Val-280 each bind ATP. An L-serine-binding site is contributed by Glu-287. 351-354 (EVSS) provides a ligand contact to ATP. Ser-387 contributes to the L-serine binding site.

This sequence belongs to the class-II aminoacyl-tRNA synthetase family. Type-1 seryl-tRNA synthetase subfamily. Homodimer. The tRNA molecule binds across the dimer.

The protein localises to the cytoplasm. The catalysed reaction is tRNA(Ser) + L-serine + ATP = L-seryl-tRNA(Ser) + AMP + diphosphate + H(+). It catalyses the reaction tRNA(Sec) + L-serine + ATP = L-seryl-tRNA(Sec) + AMP + diphosphate + H(+). Its pathway is aminoacyl-tRNA biosynthesis; selenocysteinyl-tRNA(Sec) biosynthesis; L-seryl-tRNA(Sec) from L-serine and tRNA(Sec): step 1/1. Functionally, catalyzes the attachment of serine to tRNA(Ser). Is also able to aminoacylate tRNA(Sec) with serine, to form the misacylated tRNA L-seryl-tRNA(Sec), which will be further converted into selenocysteinyl-tRNA(Sec). In Gemmatimonas aurantiaca (strain DSM 14586 / JCM 11422 / NBRC 100505 / T-27), this protein is Serine--tRNA ligase.